The sequence spans 269 residues: Formamidopyrimidine-DNA glycosylase (269 aa).

The active-site Schiff-base intermediate with DNA is P2. E3 functions as the Proton donor in the catalytic mechanism. K57 serves as the catalytic Proton donor; for beta-elimination activity. DNA is bound by residues H90, R109, and K150. An FPG-type zinc finger spans residues 235-269 (QVYGRKGEPCRVCGTPIVASKHAQRATFYCRQCQK). R259 functions as the Proton donor; for delta-elimination activity in the catalytic mechanism.

Belongs to the FPG family. Monomer. Zn(2+) serves as cofactor.

The catalysed reaction is Hydrolysis of DNA containing ring-opened 7-methylguanine residues, releasing 2,6-diamino-4-hydroxy-5-(N-methyl)formamidopyrimidine.. It carries out the reaction 2'-deoxyribonucleotide-(2'-deoxyribose 5'-phosphate)-2'-deoxyribonucleotide-DNA = a 3'-end 2'-deoxyribonucleotide-(2,3-dehydro-2,3-deoxyribose 5'-phosphate)-DNA + a 5'-end 5'-phospho-2'-deoxyribonucleoside-DNA + H(+). Functionally, involved in base excision repair of DNA damaged by oxidation or by mutagenic agents. Acts as a DNA glycosylase that recognizes and removes damaged bases. Has a preference for oxidized purines, such as 7,8-dihydro-8-oxoguanine (8-oxoG). Has AP (apurinic/apyrimidinic) lyase activity and introduces nicks in the DNA strand. Cleaves the DNA backbone by beta-delta elimination to generate a single-strand break at the site of the removed base with both 3'- and 5'-phosphates. The polypeptide is Formamidopyrimidine-DNA glycosylase (Enterobacter sp. (strain 638)).